A 389-amino-acid polypeptide reads, in one-letter code: Phosphopentomutase (389 aa).

Positions 12, 284, 289, 325, 326, and 337 each coordinate Mn(2+).

Belongs to the phosphopentomutase family. It depends on Mn(2+) as a cofactor.

The protein resides in the cytoplasm. The catalysed reaction is 2-deoxy-alpha-D-ribose 1-phosphate = 2-deoxy-D-ribose 5-phosphate. The enzyme catalyses alpha-D-ribose 1-phosphate = D-ribose 5-phosphate. Its pathway is carbohydrate degradation; 2-deoxy-D-ribose 1-phosphate degradation; D-glyceraldehyde 3-phosphate and acetaldehyde from 2-deoxy-alpha-D-ribose 1-phosphate: step 1/2. Functionally, isomerase that catalyzes the conversion of deoxy-ribose 1-phosphate (dRib-1-P) and ribose 1-phosphate (Rib-1-P) to deoxy-ribose 5-phosphate (dRib-5-P) and ribose 5-phosphate (Rib-5-P), respectively. The polypeptide is Phosphopentomutase (Anaeromyxobacter sp. (strain Fw109-5)).